Reading from the N-terminus, the 644-residue chain is Transcription factor btd (644 aa).

2 disordered regions span residues 16 to 65 and 101 to 196; these read HQAQ…TQQQ and APPS…AGSP. 2 stretches are compositionally biased toward low complexity: residues 101 to 119 and 140 to 196; these read APPS…SSPL and ASPN…AGSP. C2H2-type zinc fingers lie at residues 333–357, 363–385, and 391–413; these read HICH…LRWH, FLCL…GRTH, and YACP…KKTH. 2 disordered regions span residues 437-461 and 478-537; these read LEKK…QPDT and TSAG…SSSA. 2 stretches are compositionally biased toward low complexity: residues 499–508 and 521–537; these read TTTTSSAAAS and AIQP…SSSA.

The protein resides in the nucleus. In terms of biological role, required for the development of the antennal, intercalary and mandibular segments of the head. The sequence is that of Transcription factor btd (btd) from Drosophila melanogaster (Fruit fly).